Consider the following 90-residue polypeptide: Small ribosomal subunit protein uS15c (90 aa).

In terms of assembly, component of the chloroplast small ribosomal subunit (SSU). Mature 70S chloroplast ribosomes of higher plants consist of a small (30S) and a large (50S) subunit. The 30S small subunit contains 1 molecule of ribosomal RNA (16S rRNA) and 24 different proteins. The 50S large subunit contains 3 rRNA molecules (23S, 5S and 4.5S rRNA) and 33 different proteins.

The protein resides in the plastid. It localises to the chloroplast. Functionally, component of the chloroplast ribosome (chloro-ribosome), a dedicated translation machinery responsible for the synthesis of chloroplast genome-encoded proteins, including proteins of the transcription and translation machinery and components of the photosynthetic apparatus. The protein is Small ribosomal subunit protein uS15c (rps15) of Spinacia oleracea (Spinach).